The chain runs to 527 residues: Amine oxidase [flavin-containing] A (527 aa).

The residue at position 1 (Met-1) is an N-acetylmethionine. The Cytoplasmic segment spans residues 1-497 (MENQEKASIA…HTFWERNLPS (497 aa)). A Phosphoserine modification is found at Ser-383. Cys-406 carries the post-translational modification S-8alpha-FAD cysteine. Residues 498-518 (VSGLLKIIGFSTSVTALGFVL) traverse the membrane as a helical; Anchor for type IV membrane protein segment. Residues 519 to 527 (YKYKLLPRS) are Mitochondrial intermembrane-facing. Positions 520 to 522 (KYK) are interaction with membrane phospholipid headgroups.

It belongs to the flavin monoamine oxidase family. In terms of assembly, monomer, homo- or heterodimer (containing two subunits of similar size). Each subunit contains a covalently bound flavin. Enzymatically active as monomer. It depends on FAD as a cofactor.

Its subcellular location is the mitochondrion outer membrane. It catalyses the reaction a secondary aliphatic amine + O2 + H2O = a primary amine + an aldehyde + H2O2. The enzyme catalyses a primary methyl amine + O2 + H2O = an aldehyde + H2O2 + NH4(+). The catalysed reaction is (R)-adrenaline + O2 + H2O = (R)-3,4-dihydroxymandelaldehyde + methylamine + H2O2. It carries out the reaction dopamine + O2 + H2O = 3,4-dihydroxyphenylacetaldehyde + H2O2 + NH4(+). It catalyses the reaction tyramine + O2 + H2O = (4-hydroxyphenyl)acetaldehyde + H2O2 + NH4(+). The enzyme catalyses (R)-noradrenaline + O2 + H2O = (R)-3,4-dihydroxymandelaldehyde + H2O2 + NH4(+). The catalysed reaction is serotonin + O2 + H2O = (5-hydroxyindol-3-yl)acetaldehyde + H2O2 + NH4(+). It carries out the reaction kynuramine + O2 + H2O = 3-(2-aminophenyl)-3-oxopropanal + H2O2 + NH4(+). It catalyses the reaction tryptamine + O2 + H2O = indole-3-acetaldehyde + H2O2 + NH4(+). The enzyme catalyses 2-phenylethylamine + O2 + H2O = 2-phenylacetaldehyde + H2O2 + NH4(+). Catalyzes the oxidative deamination of primary and some secondary amine such as neurotransmitters, with concomitant reduction of oxygen to hydrogen peroxide and has important functions in the metabolism of neuroactive and vasoactive amines in the central nervous system and peripheral tissues. Preferentially oxidizes serotonin. Also catalyzes the oxidative deamination of kynuramine to 3-(2-aminophenyl)-3-oxopropanal that can spontaneously condense to 4-hydroxyquinoline. The polypeptide is Amine oxidase [flavin-containing] A (Pongo abelii (Sumatran orangutan)).